Consider the following 843-residue polypeptide: Pullulanase (843 aa).

Residues 1 to 19 (MKTKLWLLLVLLLSALIFS) form the signal peptide. D535 acts as the Nucleophile in catalysis. E564 acts as the Proton donor in catalysis.

The protein belongs to the glycosyl hydrolase 13 family.

The catalysed reaction is Hydrolysis of (1-&gt;6)-alpha-D-glucosidic linkages in pullulan, amylopectin and glycogen, and in the alpha- and beta-limit dextrins of amylopectin and glycogen.. The chain is Pullulanase (pulA) from Thermotoga maritima (strain ATCC 43589 / DSM 3109 / JCM 10099 / NBRC 100826 / MSB8).